Here is a 125-residue protein sequence, read N- to C-terminus: Large ribosomal subunit protein bL17 (125 aa).

Belongs to the bacterial ribosomal protein bL17 family. Part of the 50S ribosomal subunit. Contacts protein L32.

This Syntrophus aciditrophicus (strain SB) protein is Large ribosomal subunit protein bL17.